A 789-amino-acid chain; its full sequence is MALDFLSTDCPLGIVSDIISNVNTIKEYGYSSELSTTLAPRPSREQVLEYITRVVDKLKPLCRVDERLYIACGELVHLRIKARNTDLKYWLKSSEIDLSDVVEQAILEHIDFVQKTLNSFETSEYRDLCSLGLQSALKYEEMYLAKMRGGRLESMGQFFLRLATTATHYTMEQPAMARVLVSGEVGWTYIFRAFFTALAGQVVIPATPIMLFGGRDCGSMASCYLLNPRVTDMNSAIPALMEEVGPILCNRGGIGLSLQRFNTPPTEGCSRGVMALLKLLDSMTMAINSDGERPTGVCVYFEPWHADIRAILNMRGMLARDETVRCDNIFACMWTPDLFFDRYQRYVDGESGIMWTLFDDTASHLCHMYGNDFTREYERLERCGFGIDAIPIQDMAFIIVRSAVMTGSPFLMFKDACNRHYHFDMRQRGAIMGSNLCTEIIQHADETQNGVCNLASINLPKCLALPPPNIAGVPYFDFAALGRAAATATIFVNAMMCASTYPTVKSQKGVEENRSLGLGIQGLHTTFLMLDLDMASPEAHQLNKQIAERLLLNSMKASATLCKLGMQPFKGFEDSKYSRGELPFDAYPNVTLTNRNAWRRLRTDIKQYGLYNSQFVAYMPTVSSSQVTESSEGFSPVYTNLFSKVTATGEVLRPNVLLMRTIRSIFPQECARLQALSTLEAAKWSVVGAFGDLPVGHPLSKFKTAFEYDQTMLINMCADRAAFVDQSQSMSLFITEPADGKLPASRIMNLLVHAYKRGLKTGMYYCKIKKATNNGVFVGGDLVCTSCSL.

Substrate is bound by residues T207, 222-223 (SC), G253, 435-439 (NLCTE), and 620-624 (PTVSS). The cysteines at positions 223 and 452 are disulfide-linked. N435 functions as the Proton acceptor in the catalytic mechanism. The active-site Cysteine radical intermediate is the C437. Residue E439 is the Proton acceptor of the active site.

The protein belongs to the ribonucleoside diphosphate reductase large chain family. As to quaternary structure, heterotetramer composed of a homodimer of the large subunit (R1) and a homodimer of the small subunit (R2). Larger multisubunit protein complex are also active, composed of (R1)n(R2)n.

The enzyme catalyses a 2'-deoxyribonucleoside 5'-diphosphate + [thioredoxin]-disulfide + H2O = a ribonucleoside 5'-diphosphate + [thioredoxin]-dithiol. Its function is as follows. Ribonucleoside-diphosphate reductase holoenzyme provides the precursors necessary for viral DNA synthesis. Allows virus growth in non-dividing cells, as well as reactivation from latency in infected hosts. Catalyzes the biosynthesis of deoxyribonucleotides from the corresponding ribonucleotides. This Equus caballus (Horse) protein is Ribonucleoside-diphosphate reductase large subunit.